A 75-amino-acid chain; its full sequence is uncharacterized protein (75 aa).

The chain crosses the membrane as a helical span at residues 4-26 (PSLLFLGFSGVLAFGEVGWVGVY).

The protein resides in the membrane. This is an uncharacterized protein from Treponema pallidum (strain Nichols).